Here is a 128-residue protein sequence, read N- to C-terminus: MARVTVEDCIDKVDNRFELVLLAGHRARMISSGSPITVDRDNDKNPVVALREIADETVSPEDLKEDLIHSLQKYTEVDEPEPESVPLIASSEGGVDDADIVLDRMTEEELLAGLQGLVPPEQTDDDEG.

The protein belongs to the RNA polymerase subunit omega family. In terms of assembly, the RNAP catalytic core consists of 2 alpha, 1 beta, 1 beta' and 1 omega subunit. When a sigma factor is associated with the core the holoenzyme is formed, which can initiate transcription.

The enzyme catalyses RNA(n) + a ribonucleoside 5'-triphosphate = RNA(n+1) + diphosphate. Promotes RNA polymerase assembly. Latches the N- and C-terminal regions of the beta' subunit thereby facilitating its interaction with the beta and alpha subunits. This is DNA-directed RNA polymerase subunit omega from Azorhizobium caulinodans (strain ATCC 43989 / DSM 5975 / JCM 20966 / LMG 6465 / NBRC 14845 / NCIMB 13405 / ORS 571).